The chain runs to 467 residues: 5-phosphohydroxy-L-lysine phospho-lyase (467 aa).

N6-(pyridoxal phosphate)lysine is present on K278.

It belongs to the class-III pyridoxal-phosphate-dependent aminotransferase family. As to quaternary structure, homotetramer. Pyridoxal 5'-phosphate serves as cofactor.

The protein localises to the mitochondrion. The enzyme catalyses (5R)-5-phosphooxy-L-lysine + H2O = (S)-2-amino-6-oxohexanoate + NH4(+) + phosphate. Catalyzes the pyridoxal-phosphate-dependent breakdown of 5-phosphohydroxy-L-lysine, converting it to ammonia, inorganic phosphate and 2-aminoadipate semialdehyde. This Mus musculus (Mouse) protein is 5-phosphohydroxy-L-lysine phospho-lyase (Phykpl).